Consider the following 589-residue polypeptide: Early growth response protein 4 (589 aa).

Disordered stretches follow at residues 29-101 (GSAL…HSRR), 383-411 (AEGL…ASTQ), and 436-466 (PGSS…GRRG). The span at 76-86 (PLPPASPPPAR) shows a compositional bias: pro residues. The span at 92 to 101 (ARPRAPHSRR) shows a compositional bias: basic residues. The segment covering 395-404 (GEGGSSGDGG) has biased composition (gly residues). Over residues 444-454 (PPVPPPPPTPF) the composition is skewed to pro residues. 3 C2H2-type zinc fingers span residues 483–507 (FACP…LRIH), 513–535 (FQCR…VRTH), and 541–563 (FACD…SKVH).

This sequence belongs to the EGR C2H2-type zinc-finger protein family.

The protein localises to the nucleus. Transcriptional regulator. Recognizes and binds to the DNA sequence 5'-GCGGGGGCG-3' (GSG). Activates the transcription of target genes whose products are required for mitogenesis and differentiation. The polypeptide is Early growth response protein 4 (EGR4) (Homo sapiens (Human)).